The following is a 96-amino-acid chain: Protein Vpr (96 aa).

The tract at residues 1–42 is homooligomerization; sequence MEQAPEDQGPQREPYNEWTLELLEELKNEAVRHFPRPWLHGL. At serine 79 the chain carries Phosphoserine; by host.

The protein belongs to the HIV-1 VPR protein family. Homooligomer, may form homodimer. Interacts with p6-gag region of the Pr55 Gag precursor protein through a (Leu-X-X)4 motif near the C-terminus of the P6gag protein. Interacts with host UNG. May interact with host RAD23A/HHR23A. Interacts with host VPRBP/DCAF1, leading to hijack the CUL4A-RBX1-DDB1-DCAF1/VPRBP complex, mediating ubiquitination of host proteins such as TERT and ZGPAT and arrest of the cell cycle in G2 phase. Phosphorylated on several residues by host. These phosphorylations regulate VPR activity for the nuclear import of the HIV-1 pre-integration complex.

It localises to the virion. The protein localises to the host nucleus. Its subcellular location is the host extracellular space. During virus replication, may deplete host UNG protein, and incude G2-M cell cycle arrest. Acts by targeting specific host proteins for degradation by the 26S proteasome, through association with the cellular CUL4A-DDB1 E3 ligase complex by direct interaction with host VPRPB/DCAF-1. Cell cycle arrest reportedly occurs within hours of infection and is not blocked by antiviral agents, suggesting that it is initiated by the VPR carried into the virion. Additionally, VPR induces apoptosis in a cell cycle dependent manner suggesting that these two effects are mechanistically linked. Detected in the serum and cerebrospinal fluid of AIDS patient, VPR may also induce cell death to bystander cells. Functionally, during virus entry, plays a role in the transport of the viral pre-integration (PIC) complex to the host nucleus. This function is crucial for viral infection of non-dividing macrophages. May act directly at the nuclear pore complex, by binding nucleoporins phenylalanine-glycine (FG)-repeat regions. This chain is Protein Vpr, found in Human immunodeficiency virus type 1 group M subtype G (isolate 92NG083) (HIV-1).